The chain runs to 137 residues: Leaf-specific thionin (137 aa).

Residues 1–28 (MATNKSIKSVVICVLILGLVLEQVQVEA) form the signal peptide. Disulfide bonds link C31–C68, C32–C60, C40–C58, and C44–C54. A propeptide spans 75–137 (LNLLPESGEP…DGEVIQSVEA (63 aa)) (acidic domain).

The protein belongs to the plant thionin (TC 1.C.44) family. 4 C-C subfamily.

Its subcellular location is the secreted. Functionally, thionins are small plant proteins which are toxic to animal cells. They seem to exert their toxic effect at the level of the cell membrane. Their precise function is not known. The sequence is that of Leaf-specific thionin (THI1.5) from Hordeum vulgare (Barley).